The primary structure comprises 293 residues: tRNA-cytidine(32) 2-sulfurtransferase (293 aa).

The short motif at S62–S67 is the PP-loop motif element. [4Fe-4S] cluster contacts are provided by C137, C140, and C228.

The protein belongs to the TtcA family. As to quaternary structure, homodimer. Mg(2+) is required as a cofactor. [4Fe-4S] cluster serves as cofactor.

It is found in the cytoplasm. The enzyme catalyses cytidine(32) in tRNA + S-sulfanyl-L-cysteinyl-[cysteine desulfurase] + AH2 + ATP = 2-thiocytidine(32) in tRNA + L-cysteinyl-[cysteine desulfurase] + A + AMP + diphosphate + H(+). Its pathway is tRNA modification. Its function is as follows. Catalyzes the ATP-dependent 2-thiolation of cytidine in position 32 of tRNA, to form 2-thiocytidine (s(2)C32). The sulfur atoms are provided by the cysteine/cysteine desulfurase (IscS) system. This Brucella abortus (strain S19) protein is tRNA-cytidine(32) 2-sulfurtransferase.